The primary structure comprises 36 residues: Dermonecrotic toxin LgSicTox-beta-LOXN2 (36 aa).

The protein belongs to the arthropod phospholipase D family. Class II subfamily. Mg(2+) is required as a cofactor. In terms of processing, contains 2 disulfide bonds. In terms of tissue distribution, expressed by the venom gland.

The protein resides in the secreted. It carries out the reaction an N-(acyl)-sphingosylphosphocholine = an N-(acyl)-sphingosyl-1,3-cyclic phosphate + choline. The enzyme catalyses an N-(acyl)-sphingosylphosphoethanolamine = an N-(acyl)-sphingosyl-1,3-cyclic phosphate + ethanolamine. The catalysed reaction is a 1-acyl-sn-glycero-3-phosphocholine = a 1-acyl-sn-glycero-2,3-cyclic phosphate + choline. It catalyses the reaction a 1-acyl-sn-glycero-3-phosphoethanolamine = a 1-acyl-sn-glycero-2,3-cyclic phosphate + ethanolamine. In terms of biological role, dermonecrotic toxins cleave the phosphodiester linkage between the phosphate and headgroup of certain phospholipids (sphingolipid and lysolipid substrates), forming an alcohol (often choline) and a cyclic phosphate. This toxin acts on sphingomyelin (SM). It may also act on ceramide phosphoethanolamine (CPE), lysophosphatidylcholine (LPC) and lysophosphatidylethanolamine (LPE), but not on lysophosphatidylserine (LPS), and lysophosphatidylglycerol (LPG). It acts by transphosphatidylation, releasing exclusively cyclic phosphate products as second products. Induces dermonecrosis, hemolysis, increased vascular permeability, edema, inflammatory response, and platelet aggregation. The chain is Dermonecrotic toxin LgSicTox-beta-LOXN2 from Loxosceles gaucho (Spider).